A 230-amino-acid chain; its full sequence is Small ribosomal subunit protein uS2 (230 aa).

Belongs to the universal ribosomal protein uS2 family.

In Prochlorococcus marinus (strain NATL2A), this protein is Small ribosomal subunit protein uS2.